We begin with the raw amino-acid sequence, 141 residues long: U-scoloptoxin(17)-Er3a (141 aa).

The signal sequence occupies residues 1–21; that stretch reads MKSTFALVFGILMVIAHLSFA.

The protein belongs to the scoloptoxin-17 family. Contains 3 disulfide bonds. As to expression, expressed by the venom gland.

The protein localises to the secreted. This Ethmostigmus rubripes (Giant centipede) protein is U-scoloptoxin(17)-Er3a.